The primary structure comprises 508 residues: Photosystem II CP47 reaction center protein (508 aa).

6 consecutive transmembrane segments (helical) span residues alanine 21–serine 36, isoleucine 101–tryptophan 115, glycine 140–phenylalanine 156, isoleucine 203–serine 218, valine 237–valine 252, and serine 457–arginine 472.

It belongs to the PsbB/PsbC family. PsbB subfamily. As to quaternary structure, PSII is composed of 1 copy each of membrane proteins PsbA, PsbB, PsbC, PsbD, PsbE, PsbF, PsbH, PsbI, PsbJ, PsbK, PsbL, PsbM, PsbT, PsbX, PsbY, PsbZ, Psb30/Ycf12, at least 3 peripheral proteins of the oxygen-evolving complex and a large number of cofactors. It forms dimeric complexes. Binds multiple chlorophylls. PSII binds additional chlorophylls, carotenoids and specific lipids. serves as cofactor.

It localises to the plastid. Its subcellular location is the chloroplast thylakoid membrane. Functionally, one of the components of the core complex of photosystem II (PSII). It binds chlorophyll and helps catalyze the primary light-induced photochemical processes of PSII. PSII is a light-driven water:plastoquinone oxidoreductase, using light energy to abstract electrons from H(2)O, generating O(2) and a proton gradient subsequently used for ATP formation. In Oenothera biennis (German evening primrose), this protein is Photosystem II CP47 reaction center protein.